Reading from the N-terminus, the 1577-residue chain is High molecular weight form of myosin-1 (1577 aa).

The Myosin motor domain occupies 75–751 (KSVDDLVQMD…EQRGLELQRN (677 aa)). An N6,N6,N6-trimethyllysine modification is found at K119. ATP is bound at residue 168-175 (GESGAGKT). Actin-binding stretches follow at residues 628–650 (LDSL…KPNS) and 730–744 (QVGK…PEQR). The IQ domain maps to 755-782 (ERVTIQIQAGVRRMFARRLYKRMRAIKP). Residues 1261 to 1401 (WTKSPIPTSL…PNVEQILAAK (141 aa)) enclose the MyTH4 domain. Disordered regions lie at residues 1442–1466 (SRPA…QQAA) and 1483–1516 (QQQQ…LPAE). Low complexity-rich tracts occupy residues 1444–1466 (PAQA…QQAA) and 1483–1497 (QQQQ…QQQA). The SH3 domain maps to 1519–1577 (EEYKQVEVVYDYDGGGDAQRLVLVKGAIITVIKEYEGWAYGSTDDGQVGLYPINYTRPI).

Belongs to the TRAFAC class myosin-kinesin ATPase superfamily. Myosin family. In terms of assembly, myosin I heavy chain is single-headed.

This Acanthamoeba castellanii (Amoeba) protein is High molecular weight form of myosin-1.